A 736-amino-acid polypeptide reads, in one-letter code: Myosin-7 (736 aa).

A Myosin motor domain is found at 1–342 (NWMVTRINAT…LLGLLEEMRD (342 aa)). Positions 219 to 241 (LNKLMTNLRSTHPHFVRCIIPNE) are actin-binding. The IQ domain occupies 345-374 (LSRIITRIQAQSRGVLSRMEYKKLLERRDS). Residues 403–736 (LLKSAETEKE…MNKKREAEFQ (334 aa)) are a coiled coil. At Ser-701 the chain carries Phosphoserine. The disordered stretch occupies residues 716–736 (EAGGATSVQIEMNKKREAEFQ). Residues 727-736 (MNKKREAEFQ) show a composition bias toward basic and acidic residues.

The protein belongs to the TRAFAC class myosin-kinesin ATPase superfamily. Myosin family. As to quaternary structure, muscle myosin is a hexameric protein that consists of 2 heavy chain subunits (MHC), 2 alkali light chain subunits (MLC) and 2 regulatory light chain subunits (MLC-2). Interacts with ECPAS. Interacts (via C-terminus) with LRRC39.

It localises to the cytoplasm. The protein localises to the myofibril. Its subcellular location is the sarcomere. Myosins are actin-based motor molecules with ATPase activity essential for muscle contraction. Forms regular bipolar thick filaments that, together with actin thin filaments, constitute the fundamental contractile unit of skeletal and cardiac muscle. In Oryctolagus cuniculus (Rabbit), this protein is Myosin-7 (MYH7).